The following is a 62-amino-acid chain: Photosystem II reaction center protein Z (62 aa).

A run of 2 helical transmembrane segments spans residues Ala8–Ala28 and Trp41–Val61.

It belongs to the PsbZ family. In terms of assembly, PSII is composed of 1 copy each of membrane proteins PsbA, PsbB, PsbC, PsbD, PsbE, PsbF, PsbH, PsbI, PsbJ, PsbK, PsbL, PsbM, PsbT, PsbX, PsbY, PsbZ, Psb30/Ycf12, peripheral proteins PsbO, CyanoQ (PsbQ), PsbU, PsbV and a large number of cofactors. It forms dimeric complexes.

The protein localises to the cellular thylakoid membrane. Functionally, may control the interaction of photosystem II (PSII) cores with the light-harvesting antenna, regulates electron flow through the 2 photosystem reaction centers. PSII is a light-driven water plastoquinone oxidoreductase, using light energy to abstract electrons from H(2)O, generating a proton gradient subsequently used for ATP formation. The sequence is that of Photosystem II reaction center protein Z from Nostoc sp. (strain PCC 7120 / SAG 25.82 / UTEX 2576).